We begin with the raw amino-acid sequence, 158 residues long: MQIQIVCVGKIKDAYISSGVVEFEKRLRPYGKIFITELAEVKIPDNASASDELRVKEREGELILANVKEGFFKIALDPNGMSLSSEEFSDVFRDAKLSGKNLCFIIGGPLGLSPKLLQSVEKKLSLSRMTFTHPMTRLILLEQVYRAFRILNGEPYHK.

S-adenosyl-L-methionine is bound by residues Leu76, Gly107, and 126-131 (LSRMTF).

Belongs to the RNA methyltransferase RlmH family.

It is found in the cytoplasm. The catalysed reaction is pseudouridine(1915) in 23S rRNA + S-adenosyl-L-methionine = N(3)-methylpseudouridine(1915) in 23S rRNA + S-adenosyl-L-homocysteine + H(+). Functionally, specifically methylates the pseudouridine at position 1915 (m3Psi1915) in 23S rRNA. This is Putative ribosomal RNA large subunit methyltransferase H from Methanocorpusculum labreanum (strain ATCC 43576 / DSM 4855 / Z).